A 510-amino-acid chain; its full sequence is 2,3-bisphosphoglycerate-independent phosphoglycerate mutase (510 aa).

Mn(2+) is bound by residues Asp-12 and Ser-62. Residue Ser-62 is the Phosphoserine intermediate of the active site. Substrate is bound by residues His-123, 153–154 (RD), Arg-185, Arg-191, 260–263 (RPDR), and Lys-333. Mn(2+) is bound by residues Asp-400, His-404, Asp-441, His-442, and His-460.

It belongs to the BPG-independent phosphoglycerate mutase family. As to quaternary structure, monomer. The cofactor is Mn(2+).

It carries out the reaction (2R)-2-phosphoglycerate = (2R)-3-phosphoglycerate. The protein operates within carbohydrate degradation; glycolysis; pyruvate from D-glyceraldehyde 3-phosphate: step 3/5. Its function is as follows. Catalyzes the interconversion of 2-phosphoglycerate and 3-phosphoglycerate. The chain is 2,3-bisphosphoglycerate-independent phosphoglycerate mutase from Clostridium acetobutylicum (strain ATCC 824 / DSM 792 / JCM 1419 / IAM 19013 / LMG 5710 / NBRC 13948 / NRRL B-527 / VKM B-1787 / 2291 / W).